Consider the following 1057-residue polypeptide: Glycine dehydrogenase (decarboxylating), mitochondrial (1057 aa).

The N-terminal 86 residues, methionine 1 to serine 86, are a transit peptide targeting the mitochondrion. The segment covering serine 18–glutamate 27 has biased composition (basic and acidic residues). The interval serine 18–arginine 47 is disordered. Residues serine 28 to arginine 47 show a composition bias toward low complexity. Lysine 792 is subject to N6-(pyridoxal phosphate)lysine.

It belongs to the GcvP family. Homodimer. The glycine cleavage system is composed of four proteins: P, T, L and H. Requires pyridoxal 5'-phosphate as cofactor. As to expression, highly expressed in leaves. Detected in roots and embryos.

The protein resides in the mitochondrion. It carries out the reaction N(6)-[(R)-lipoyl]-L-lysyl-[glycine-cleavage complex H protein] + glycine + H(+) = N(6)-[(R)-S(8)-aminomethyldihydrolipoyl]-L-lysyl-[glycine-cleavage complex H protein] + CO2. In terms of biological role, the glycine cleavage system catalyzes the degradation of glycine. The P protein binds the alpha-amino group of glycine through its pyridoxal phosphate cofactor; CO(2) is released and the remaining methylamine moiety is then transferred to the lipoamide cofactor of the H protein. The polypeptide is Glycine dehydrogenase (decarboxylating), mitochondrial (GDCSP) (Pisum sativum (Garden pea)).